Here is a 177-residue protein sequence, read N- to C-terminus: R-phycoerythrin beta chain (177 aa).

Residues asparagine 35 and aspartate 39 each contribute to the (2R,3E)-phycoerythrobilin site. Phycourobilin-binding residues include cysteine 50, aspartate 54, and cysteine 61. (2R,3E)-phycoerythrobilin is bound by residues asparagine 72, 77 to 78, cysteine 82, and 84 to 85; these read RR and RD. Asparagine 72 carries the N4-methylasparagine modification. 147 to 148 contributes to the phycourobilin binding site; sequence SG. Residue cysteine 158 participates in (2R,3E)-phycoerythrobilin binding.

The protein belongs to the phycobiliprotein family. As to quaternary structure, heterododecamer of 6 alpha and 6 beta chains. The basic functional unit of phycobiliproteins is a ring-shaped hexamer formed from two back-to-back trimers contacting via the alpha chain subunits. The trimers are composed of alpha/beta subunit heterodimers arranged around a three-fold axis of symmetry. The phycoerythrins also contain a gamma subunit which is located in the center of the hexamer. Contains two covalently linked phycoerythrobilin chromophores and one covalently linked phycourobilin chromophore.

It is found in the plastid. The protein resides in the chloroplast thylakoid membrane. In terms of biological role, light-harvesting photosynthetic tetrapyrrole chromophore-protein from the phycobiliprotein complex. The chain is R-phycoerythrin beta chain (cpeB) from Griffithsia monilis (Red alga).